Here is a 311-residue protein sequence, read N- to C-terminus: MIKKEIIILCGPTASGKSCLGHELAKAYDCEIINIDSMQVYKEIPIITASPIQIYNTDIHYHLYNFLSITEDFSVIKYLKLAAKKIKEITVRGKLPILIGGTGLYINLLVFGYNNIPDISEDLRVQVRNLHDKIGNIELWNQLKKLDPIASTKINHCDTQRLIRAYEVFMHTGKSIFSFHTAPKERILSDFNFKIIFLNPERKFLYKTCDERLDKIFKDKAIDEIALLKKQFTPEEYAHLKAVGIKEILAYLDGNLTLDAALNVAQMRTRQYAKRQVTWFTHQIQDKTILEYSTQEEFAQILRHLLFILRS.

ATP is bound at residue 11-18 (GPTASGKS). 13–18 (TASGKS) is a binding site for substrate. Interaction with substrate tRNA stretches follow at residues 36–39 (DSMQ) and 160–164 (QRLIR).

It belongs to the IPP transferase family. As to quaternary structure, monomer. Mg(2+) serves as cofactor.

The enzyme catalyses adenosine(37) in tRNA + dimethylallyl diphosphate = N(6)-dimethylallyladenosine(37) in tRNA + diphosphate. In terms of biological role, catalyzes the transfer of a dimethylallyl group onto the adenine at position 37 in tRNAs that read codons beginning with uridine, leading to the formation of N6-(dimethylallyl)adenosine (i(6)A). This Rickettsia prowazekii (strain Madrid E) protein is tRNA dimethylallyltransferase.